The following is a 137-amino-acid chain: Ribonuclease VapC51 (137 aa).

A PINc domain is found at 5–120 (YLLDTSVIKR…HYDADFDLIA (116 aa)). Mg(2+) is bound by residues aspartate 8 and aspartate 95.

Belongs to the PINc/VapC protein family. Requires Mg(2+) as cofactor.

Toxic component of a type II toxin-antitoxin (TA) system. An RNase. Its cognate antitoxin is VapB51. This chain is Ribonuclease VapC51, found in Mycobacterium tuberculosis (strain ATCC 25618 / H37Rv).